We begin with the raw amino-acid sequence, 76 residues long: Tautomerase PptA (76 aa).

P2 (proton acceptor; via imino nitrogen) is an active-site residue.

It belongs to the 4-oxalocrotonate tautomerase family. PptA subfamily. In terms of assembly, homodimer.

The protein resides in the cytoplasm. In Pectobacterium carotovorum subsp. carotovorum (strain PC1), this protein is Tautomerase PptA.